The following is a 1250-amino-acid chain: Probable autotransporter YfaL (1250 aa).

The N-terminal stretch at 1-28 (MRIIFLRKEYLSLLPSMIASLFSANGVA) is a signal peptide. The segment at 914 to 951 (RSQEVTPPSPPDPDPTPDPDPTPDPDPTPDPEPTPAYQ) is disordered. Repeat unit 1 spans residues 919-920 (TP). The 15 X 2 AA approximate tandem repeats of [DTPE]-P stretch occupies residues 919–948 (TPPSPPDPDPTPDPDPTPDPDPTPDPEPTP). One copy of the 2; approximate repeat lies at 921–922 (PS). Repeat 3 spans residues 923 to 924 (PP). A 4; approximate repeat occupies 925-926 (DP). A run of 11 repeats spans residues 927 to 928 (DP), 929 to 930 (TP), 931 to 932 (DP), 933 to 934 (DP), 935 to 936 (TP), 937 to 938 (DP), 939 to 940 (DP), 941 to 942 (TP), 943 to 944 (DP), 945 to 946 (EP), and 947 to 948 (TP). Residues 928 to 942 (PTPDPDPTPDPDPTP) show a composition bias toward acidic residues. An Autotransporter domain is found at 980–1250 (AGGDGQTLNL…AGFLSMTVKW (271 aa)).

In terms of processing, an approximately 170 kDa protein is detected in the outer membrane, while a C-terminal 55 kDa fragment is detected in whole cells. The full-length putative autotransporter may be cleaved to release the mature protein from the outer membrane; Pefabloc SC, a Ser-Thr protease inhibitor prevents the appearance of the 55 kDa C--terminal fragment.

The protein resides in the periplasm. Its subcellular location is the secreted. It is found in the cell surface. The protein localises to the cell outer membrane. Its function is as follows. Probably an autotransporter. Upon overexpression shows increased adherence to polyvinyl chloride (PVC) plates, increased mature biofilm formation. The protein is Probable autotransporter YfaL (yfaL) of Escherichia coli (strain K12).